The chain runs to 220 residues: Ribosomal RNA large subunit methyltransferase E (220 aa).

5 residues coordinate S-adenosyl-L-methionine: glycine 60, tryptophan 62, aspartate 92, aspartate 108, and aspartate 133. The active-site Proton acceptor is lysine 173.

Belongs to the class I-like SAM-binding methyltransferase superfamily. RNA methyltransferase RlmE family.

The protein localises to the cytoplasm. The enzyme catalyses uridine(2552) in 23S rRNA + S-adenosyl-L-methionine = 2'-O-methyluridine(2552) in 23S rRNA + S-adenosyl-L-homocysteine + H(+). Its function is as follows. Specifically methylates the uridine in position 2552 of 23S rRNA at the 2'-O position of the ribose in the fully assembled 50S ribosomal subunit. The chain is Ribosomal RNA large subunit methyltransferase E from Paraburkholderia xenovorans (strain LB400).